A 381-amino-acid polypeptide reads, in one-letter code: Succinyl-diaminopimelate desuccinylase (381 aa).

His71 serves as a coordination point for Zn(2+). Asp73 is an active-site residue. Asp104 lines the Zn(2+) pocket. The active-site Proton acceptor is the Glu138. Zn(2+) is bound by residues Glu139, Glu167, and His353.

The protein belongs to the peptidase M20A family. DapE subfamily. Homodimer. Requires Zn(2+) as cofactor. Co(2+) serves as cofactor.

It carries out the reaction N-succinyl-(2S,6S)-2,6-diaminopimelate + H2O = (2S,6S)-2,6-diaminopimelate + succinate. It functions in the pathway amino-acid biosynthesis; L-lysine biosynthesis via DAP pathway; LL-2,6-diaminopimelate from (S)-tetrahydrodipicolinate (succinylase route): step 3/3. Catalyzes the hydrolysis of N-succinyl-L,L-diaminopimelic acid (SDAP), forming succinate and LL-2,6-diaminopimelate (DAP), an intermediate involved in the bacterial biosynthesis of lysine and meso-diaminopimelic acid, an essential component of bacterial cell walls. This is Succinyl-diaminopimelate desuccinylase from Shewanella halifaxensis (strain HAW-EB4).